The sequence spans 71 residues: ATP synthase subunit c (71 aa).

The next 2 helical transmembrane spans lie at isoleucine 4–valine 24 and phenylalanine 47–leucine 67.

This sequence belongs to the ATPase C chain family. As to quaternary structure, F-type ATPases have 2 components, F(1) - the catalytic core - and F(0) - the membrane proton channel. F(1) has five subunits: alpha(3), beta(3), gamma(1), delta(1), epsilon(1). F(0) has three main subunits: a(1), b(2) and c(10-14). The alpha and beta chains form an alternating ring which encloses part of the gamma chain. F(1) is attached to F(0) by a central stalk formed by the gamma and epsilon chains, while a peripheral stalk is formed by the delta and b chains.

The protein localises to the cell membrane. In terms of biological role, f(1)F(0) ATP synthase produces ATP from ADP in the presence of a proton or sodium gradient. F-type ATPases consist of two structural domains, F(1) containing the extramembraneous catalytic core and F(0) containing the membrane proton channel, linked together by a central stalk and a peripheral stalk. During catalysis, ATP synthesis in the catalytic domain of F(1) is coupled via a rotary mechanism of the central stalk subunits to proton translocation. Its function is as follows. Key component of the F(0) channel; it plays a direct role in translocation across the membrane. A homomeric c-ring of between 10-14 subunits forms the central stalk rotor element with the F(1) delta and epsilon subunits. In Enterococcus hirae (strain ATCC 9790 / DSM 20160 / JCM 8729 / LMG 6399 / NBRC 3181 / NCIMB 6459 / NCDO 1258 / NCTC 12367 / WDCM 00089 / R), this protein is ATP synthase subunit c.